A 349-amino-acid chain; its full sequence is GATA zinc finger domain-containing protein 24 (349 aa).

2 stretches are compositionally biased toward low complexity: residues 95–169 (NINR…VNKN) and 177–195 (NKSC…NNNS). 2 disordered regions span residues 95–227 (NINR…PVIK) and 250–294 (DYDY…KPVQ). Over residues 196-212 (ENKEKNNINNNNEKENN) the composition is skewed to basic and acidic residues. Residues 257-272 (SNESSSPTLSASTLSS) show a composition bias toward low complexity. Basic residues predominate over residues 278–289 (KVLKRGRGRPSK). The GATA-type zinc finger occupies 295–323 (CFSCFRSNTPEWRKGKDKDGNVIDLCNAC).

In Dictyostelium discoideum (Social amoeba), this protein is GATA zinc finger domain-containing protein 24 (gtaX).